The chain runs to 514 residues: Na(+)/H(+) antiporter NhaB (514 aa).

Transmembrane regions (helical) follow at residues L23–A43, P63–A83, L97–F117, L120–F140, F144–I164, L202–P222, F238–M258, A303–I323, L357–I377, L391–I411, A447–I467, and V475–F495.

It belongs to the NhaB Na(+)/H(+) (TC 2.A.34) antiporter family.

It is found in the cell inner membrane. The enzyme catalyses 2 Na(+)(in) + 3 H(+)(out) = 2 Na(+)(out) + 3 H(+)(in). In terms of biological role, na(+)/H(+) antiporter that extrudes sodium in exchange for external protons. This chain is Na(+)/H(+) antiporter NhaB, found in Salmonella heidelberg (strain SL476).